The following is a 617-amino-acid chain: Vitamin B12 transporter BtuB (617 aa).

A signal peptide spans M1–A22. A TonB box motif is present at residues E29–N36. Positions Q40–R154 constitute a TBDR plug domain. Residues D159–F617 enclose the TBDR beta-barrel domain. The TonB C-terminal box signature appears at V600–F617.

Belongs to the TonB-dependent receptor family. BtuB (TC 1.B.14.3.1) subfamily.

It is found in the cell outer membrane. Its function is as follows. Involved in the active translocation of vitamin B12 (cyanocobalamin) across the outer membrane to the periplasmic space. It derives its energy for transport by interacting with the trans-periplasmic membrane protein TonB. The chain is Vitamin B12 transporter BtuB from Vibrio campbellii (strain ATCC BAA-1116).